We begin with the raw amino-acid sequence, 177 residues long: ATP synthase subunit delta (177 aa).

It belongs to the ATPase delta chain family. As to quaternary structure, F-type ATPases have 2 components, F(1) - the catalytic core - and F(0) - the membrane proton channel. F(1) has five subunits: alpha(3), beta(3), gamma(1), delta(1), epsilon(1). F(0) has three main subunits: a(1), b(2) and c(10-14). The alpha and beta chains form an alternating ring which encloses part of the gamma chain. F(1) is attached to F(0) by a central stalk formed by the gamma and epsilon chains, while a peripheral stalk is formed by the delta and b chains.

The protein resides in the cell inner membrane. In terms of biological role, f(1)F(0) ATP synthase produces ATP from ADP in the presence of a proton or sodium gradient. F-type ATPases consist of two structural domains, F(1) containing the extramembraneous catalytic core and F(0) containing the membrane proton channel, linked together by a central stalk and a peripheral stalk. During catalysis, ATP synthesis in the catalytic domain of F(1) is coupled via a rotary mechanism of the central stalk subunits to proton translocation. Its function is as follows. This protein is part of the stalk that links CF(0) to CF(1). It either transmits conformational changes from CF(0) to CF(1) or is implicated in proton conduction. The protein is ATP synthase subunit delta of Janthinobacterium sp. (strain Marseille) (Minibacterium massiliensis).